A 967-amino-acid chain; its full sequence is Transmembrane channel-like protein 5 (967 aa).

Composition is skewed to polar residues over residues 1–10, 21–31, 53–62, and 168–184; these read MSSFHQNSSY, GSRNHTHNYLE, NPHSSGSRTN, and QDNS…SNLP. The interval 1-240 is disordered; the sequence is MSSFHQNSSY…EEGDGYSSSK (240 aa). At 1–420 the chain is on the extracellular side; sequence MSSFHQNSSY…YFSFLRWLLK (420 aa). A helical membrane pass occupies residues 421-441; sequence FNIFSFVMNFSFIIIPQFTVG. The Cytoplasmic portion of the chain corresponds to 442 to 449; it reads AKNTLQFT. Residues 450–470 traverse the membrane as a helical segment; sequence GLEFFTGAGYFGDTVMYYGFY. Residues 471 to 487 are Extracellular-facing; the sequence is TNSTIRHRMGGASYNMQ. The helical transmembrane segment at 488 to 508 threads the bilayer; that stretch reads LAYIFTIGACLVVCFFSLLFS. Residues 509–581 lie on the Cytoplasmic side of the membrane; the sequence is MAKYFRNNFI…NQQLTRFSAH (73 aa). A helical transmembrane segment spans residues 582–602; sequence VAAWLVSTGVTAACCVAVYYL. Residues 603–616 are Extracellular-facing; sequence AEYNSEFLKTHRNP. Residues 617-637 form a helical membrane-spanning segment; the sequence is GAVLLLPFVVSCINLAVPRFY. The Cytoplasmic portion of the chain corresponds to 638 to 660; sequence SMFRLVERYEIPRQEVYVLLVRN. The helical transmembrane segment at 661-681 threads the bilayer; that stretch reads IFLKISIVGILCYYWLNIVAL. The Extracellular portion of the chain corresponds to 682-694; sequence SGEECWETLIGQD. The chain crosses the membrane as a helical span at residues 695–715; that stretch reads IYRLLLMDFVFSLADSLLGEF. Topologically, residues 716–749 are cytoplasmic; the sequence is LRRLIGMKFTSLSLQEFDIARNVLELIYAQTLTW. Residues 750–770 traverse the membrane as a helical segment; the sequence is LGIFFCPLLPFIQMITLFIMF. The Extracellular segment spans residues 771-796; that stretch reads YVKNVSLMMNFQPPSKAWRASQMITF. Residues 797-817 traverse the membrane as a helical segment; the sequence is FIFLLFFPSFTGVLCTLAITI. Over 818–861 the chain is Cytoplasmic; the sequence is WRLKPSADCGPFRGLPSFIQSIYSWIDTLSRRPGYLWVVWIYQN. The helical transmembrane segment at 862 to 882 threads the bilayer; the sequence is LIGSVHFFFILTLIVLIITYL. At 883–967 the chain is on the extracellular side; sequence YWQITEGRKV…RSAQEENPIA (85 aa).

This sequence belongs to the TMC family. In terms of tissue distribution, ubiquitously expressed.

It localises to the membrane. Probable component of an ion channel. Molecular function hasn't been characterized yet. The sequence is that of Transmembrane channel-like protein 5 from Mus musculus (Mouse).